Here is a 626-residue protein sequence, read N- to C-terminus: Solute carrier family 13 member 4 (626 aa).

4 consecutive transmembrane segments (helical) span residues 13-33, 52-72, 77-97, and 113-133; these read LLLVVCVPLLLLPLPVLHPSS, AVPLGAAALVPAFLYPFFGVL, VAAEYFKNTTLLLVGVICVAA, and VLMAGAKPGMLLLCFMCCTTL. Residues 217 to 228 show a composition bias toward polar residues; the sequence is SITNPIKTANQH. The segment at 217-252 is disordered; sequence SITNPIKTANQHQGKKQHPSQEKPQVLTPSPRKQKL. Transmembrane regions (helical) follow at residues 274-294, 309-329, 372-392, 414-434, 466-486, 499-519, 543-563, and 590-610; these read YSATIGGLTTIIGTSTSLIFL, FGTWFLFSFPISLIMLVVSWF, ISYPEMVTGFFFILMTVLWFT, ATVSVFLGFLLFLIPAKKPCF, IVILVGGGYALASGSKSSGLS, LPPWAVTLLACILVSIVTEFV, PLYTLIPVTMCISFAVMLPVG, and VIGLVIVMVAINTWGVSLFHL.

The protein belongs to the SLC13A/DASS transporter (TC 2.A.47) family. NADC subfamily. In terms of tissue distribution, highly expressed in placenta and testis with intermediate levels in brain and lower levels in heart, thymus and liver.

It is found in the membrane. The catalysed reaction is sulfate(out) + 3 Na(+)(out) = sulfate(in) + 3 Na(+)(in). Transport is inhibited by thiosulfate, phosphate, molybdate, selenate and tungstate. Not inhibited by oxalate, citrate, succinate, phenol red or 4,4'-diisothiocyanostilbene-2,2'-disulfonic acid (DIDS). Sodium:sulfate symporter that mediates sulfate reabsorption in the high endothelial venules (HEV). This chain is Solute carrier family 13 member 4 (SLC13A4), found in Homo sapiens (Human).